A 455-amino-acid chain; its full sequence is Peroxisomal membrane protein PEX3 (455 aa).

The segment covering 113-125 (TVLSDDFSTSQEG) has biased composition (polar residues). The segment at 113-135 (TVLSDDFSTSQEGAISEDTNKPP) is disordered. Residues 155–171 (FLTLIYCESLLIVFLHL) form a helical membrane-spanning segment.

It belongs to the peroxin-3 family. In terms of assembly, component of the peroxisomal docking complex, composed of at least PEX3, PEX13, PEX14 and PEX17. Component of the peroxisomal translocation complex, composed of at least PEX3, PEX2, PEX10 and PEX12. Interacts with PEX19. Interacts with the pexophagy receptor ATG30.

It is found in the peroxisome membrane. Functionally, peroxisomal membrane protein required for peroxisome biosynthesis. Shared component of both the peroxisomal docking complex and the peroxisomal translocation complex. The two types of peroxisomal matrix targeting signals, PTS1 and PTS2, are first recognized in the cytosol by their receptors PEX5 and PEX7, respectively, which then carry the cargo to the peroxisomal membrane. The peroxisomal targeting signal (PTS) receptor-cargo complexes interact with peroxisomal membrane protein (PMP) components of the docking complex. They have then additional downstream interactions with the translocation complex, leading to the transport of fully folded and oligomerized cargo into the peroxisome matrix. PEX3 acts as an anchoring site for PEX19 on the peroxisomal membrane and thus plays a crucial role in the assembly of the peroxisomal translocation complex. Is also essential for the interaction between the two complexes. Finally. PEX3 activates selective autophagy of peroxisomes (pexophagy) via interaction with the pexophagy receptor ATG30. This chain is Peroxisomal membrane protein PEX3, found in Komagataella phaffii (strain GS115 / ATCC 20864) (Yeast).